A 2377-amino-acid chain; its full sequence is Serine/threonine-protein kinase WNK1 (2377 aa).

2 disordered regions span residues Met1 to Arg79 and Leu93 to Asp203. 2 positions are modified to phosphothreonine: Thr17 and Thr58. Residues Arg48–Arg64 show a composition bias toward basic and acidic residues. Low complexity-rich tracts occupy residues Pro101–Gln111 and Val127–Pro141. Positions Ser149–Thr158 are enriched in polar residues. A phosphoserine mark is found at Ser165 and Ser172. One can recognise a Protein kinase domain in the interval Leu221–Phe479. Ser231 lines the ATP pocket. Positions 283 and 299 each coordinate chloride. ATP-binding positions include Thr301–Met304 and Lys351. Asp368 (proton acceptor) is an active-site residue. Chloride contacts are provided by Leu369 and Leu371. Residues Ser378 and Ser382 each carry the phosphoserine; by autocatalysis modification. An autoinhibitory domain region spans residues Glu488–Ala555. Basic and acidic residues predominate over residues Gln573 to Ser588. Disordered regions lie at residues Gln573–Thr782 and Pro1013–Lys1114. 3 stretches are compositionally biased toward polar residues: residues Asn593–Val628, His638–Pro705, and Ser713–Ser733. The interaction with KLHL3 stretch occupies residues Glu629–Gln639. Positions Gln734–Pro746 are enriched in low complexity. Over residues Thr747–Thr782 the composition is skewed to polar residues. Residues Thr1018 to Gln1028 show a composition bias toward low complexity. The segment covering Ala1029 to Ser1038 has biased composition (polar residues). Over residues Pro1042 to Pro1058 the composition is skewed to low complexity. Residues Ser1075–Ser1085 are compositionally biased toward polar residues. Basic residues predominate over residues Thr1093–Lys1114. The RFXV motif 1 motif lies at Arg1252–Val1255. Ser1256 is subject to Phosphoserine. 2 disordered regions span residues Gly1726–Pro1760 and Thr1818–Ala1847. Over residues Pro1738 to Gly1748 the composition is skewed to low complexity. At Thr1843 the chain carries Phosphothreonine. Positions Arg1854–Val1857 match the RFXV motif 2 motif. Positions Thr1860–Thr1945 are disordered. Residues Asp1863–His1879 show a composition bias toward basic and acidic residues. The span at Ser1882–Val1900 shows a compositional bias: low complexity. 2 short sequence motifs (RFXV motif) span residues Arg1940–Val1943 and Arg1952–Val1955. The span at Glu1959–Gly1969 shows a compositional bias: basic and acidic residues. 5 disordered regions span residues Glu1959 to Ile1984, Pro1989 to Asp2008, Ser2015 to Asp2064, Val2107 to Ser2191, and Ser2203 to Gly2239. Phosphoserine is present on Ser1973. A compositionally biased stretch (basic and acidic residues) spans Pro1989–Glu1998. Residues Ser2006, Ser2007, Ser2022, Ser2024, and Ser2027 each carry the phosphoserine modification. The span at Ser2035–Asp2057 shows a compositional bias: low complexity. Phosphoserine is present on Ser2116. Residues Gly2117–Lys2129 show a composition bias toward basic residues. A compositionally biased stretch (low complexity) spans Ser2130 to Ser2140. Polar residues predominate over residues Pro2141 to Ser2191. Low complexity predominate over residues Gly2208–Ala2232. The interval Ser2236–Ala2256 is amphipathic alpha-helix. Phosphoserine is present on residues Ser2265 and Ser2281. Residues Pro2325 to Gly2344 are disordered. Residues Ser2365 and Ser2367 each carry the phosphoserine modification.

It belongs to the protein kinase superfamily. Ser/Thr protein kinase family. WNK subfamily. As to quaternary structure, interacts with WNK3. Interacts with WNK4; inhibiting the activity of WNK4. Interacts with SGK1; promoting its activation. Associates with the mTORC2 complex. Interacts with UVRAG. Interacts with isoform 1; inhibiting isoform 1 activity. Mg(2+) serves as cofactor. In terms of processing, autophosphorylated at Ser-378 and Ser-382, promoting its activity. Autophosphorylation at Ser-382 is inhibited by intracellular calcium. Phosphorylation at Thr-58 increases ability to activate SGK1. Post-translationally, ubiquitinated by the BCR(KLHL3) complex, leading to its degradation. Also ubiquitinated by the BCR(KLHL2) complex. May be O-glycosylated. Widely expressed in both adult and embryonic tissue, with highest levels observed in the testis and lower levels in heart, lung, kidney, placenta, brain and skeletal muscle. Expressed in pancreatic duct. Two isoforms are expressed in heart, a single shorter isoform in the kidney. Locates to the distal convoluted tubule, the medullary collecting duct and the cortical collecting duct of the kidney. As to expression, restricted to the nervous system, expressed preferentially in sensory neurons than in motor neurons and in general more abundant in axons than in cell bodies (at protein level). In the DRG, predominantly expressed in the satellite cells that envelop sensory neurons, but low expression also observed in the cell bodies of neurons (at protein level). In the sciatic nerve, expressed in the Schwann cells that surround axons and in a mosaic distribution of axons (at protein level). In the spinal cord, expressed in superficial layers (LI and LII), as well as in the fibers of the Lissauer tract (at protein level). Also detected in the axon fibers of dorsolateral funiculus and lateral funiculus (at protein level).

It localises to the cytoplasm. It is found in the nucleus. The protein resides in the cytoskeleton. The protein localises to the spindle. It catalyses the reaction L-seryl-[protein] + ATP = O-phospho-L-seryl-[protein] + ADP + H(+). The enzyme catalyses L-threonyl-[protein] + ATP = O-phospho-L-threonyl-[protein] + ADP + H(+). With respect to regulation, activated in response to hyperosmotic stress: cell shrinkage promotes formation of a membraneless compartment that concentrates WNK1 with its substrates, OXSR1/OSR1 and STK39/SPAK. Activation requires autophosphorylation of Ser-382 and, to a lower extent, Ser-378. Autophosphorylation and subsequent activation is inhibited by increases in intracellular ionic strength: Cl(-) potently inhibits WNK1 kinase activity via direct binding. Also inhibited by K(+) ions. Its function is as follows. Serine/threonine-protein kinase component of the WNK1-SPAK/OSR1 kinase cascade, which acts as a key regulator of blood pressure and regulatory volume increase by promoting ion influx. WNK1 mediates regulatory volume increase in response to hyperosmotic stress by acting as a molecular crowding sensor, which senses cell shrinkage and mediates formation of a membraneless compartment by undergoing liquid-liquid phase separation. The membraneless compartment concentrates WNK1 with its substrates, OXSR1/OSR1 and STK39/SPAK, promoting WNK1-dependent phosphorylation and activation of downstream kinases OXSR1/OSR1 and STK39/SPAK. Following activation, OXSR1/OSR1 and STK39/SPAK catalyze phosphorylation of ion cotransporters SLC12A1/NKCC2, SLC12A2/NKCC1, SLC12A5/KCC2 and SLC12A6/KCC3, regulating their activity. Phosphorylation of Na-K-Cl cotransporters SLC12A2/NKCC1 and SLC12A2/NKCC1 promote their activation and ion influx; simultaneously, phosphorylation of K-Cl cotransporters SLC12A5/KCC2 and SLC12A6/KCC3 inhibit their activity, blocking ion efflux. Also acts as a regulator of angiogenesis in endothelial cells. Also acts independently of the WNK1-SPAK/OSR1 kinase cascade by catalyzing phosphorylation of other substrates, such as SYT2, PCF11 and NEDD4L. Mediates phosphorylation of SYT2, regulating SYT2 association with phospholipids and membrane-binding. Regulates mRNA export in the nucleus by mediating phosphorylation of PCF11, thereby decreasing the association between PCF11 and POLR2A/RNA polymerase II and promoting mRNA export to the cytoplasm. Acts as a negative regulator of autophagy. Required for the abscission step during mitosis, independently of the WNK1-SPAK/OSR1 kinase cascade. WNK1 may also play a role in actin cytoskeletal reorganization. Also acts as a scaffold protein independently of its protein kinase activity: negatively regulates cell membrane localization of various transporters and channels, such as SLC4A4, SLC26A6, SLC26A9, TRPV4 and CFTR. Involved in the regulation of epithelial Na(+) channel (ENaC) by promoting activation of SGK1 in a kinase-independent manner: probably acts as a scaffold protein that promotes the recruitment of SGK1 to the mTORC2 complex in response to chloride, leading to mTORC2-dependent phosphorylation and activation of SGK1. Acts as an assembly factor for the ER membrane protein complex independently of its protein kinase activity: associates with EMC2 in the cytoplasm via its amphipathic alpha-helix, and prevents EMC2 ubiquitination and subsequent degradation, thereby promoting EMC2 stabilization. In terms of biological role, kinase-defective isoform specifically expressed in kidney, which acts as a dominant-negative regulator of the longer isoform 1. Does not directly inhibit WNK4 and has no direct effect on sodium and chloride ion transport. Down-regulates sodium-chloride cotransporter activity indirectly by inhibiting isoform 1, it associates with isoform 1 and attenuates its kinase activity. In kidney, may play an important role regulating sodium and potassium balance. This chain is Serine/threonine-protein kinase WNK1, found in Mus musculus (Mouse).